The chain runs to 35 residues: Cecropin-B (35 aa).

The residue at position 35 (L35) is a Leucine amide.

This sequence belongs to the cecropin family.

The protein resides in the secreted. Its function is as follows. Cecropins have lytic and antibacterial activity against several Gram-positive and Gram-negative bacteria. The polypeptide is Cecropin-B (Antheraea pernyi (Chinese oak silk moth)).